Reading from the N-terminus, the 398-residue chain is Argininosuccinate synthase (398 aa).

9–17 (AYSGGLDTS) contacts ATP. Y85 contributes to the L-citrulline binding site. Residue G115 coordinates ATP. T117, N121, and D122 together coordinate L-aspartate. N121 provides a ligand contact to L-citrulline. Residues R125, S173, E258, and Y270 each coordinate L-citrulline.

This sequence belongs to the argininosuccinate synthase family. Type 1 subfamily. Homotetramer.

The protein localises to the cytoplasm. It carries out the reaction L-citrulline + L-aspartate + ATP = 2-(N(omega)-L-arginino)succinate + AMP + diphosphate + H(+). The protein operates within amino-acid biosynthesis; L-arginine biosynthesis; L-arginine from L-ornithine and carbamoyl phosphate: step 2/3. The sequence is that of Argininosuccinate synthase from Streptococcus pneumoniae (strain Hungary19A-6).